Here is a 139-residue protein sequence, read N- to C-terminus: MAVKIKLKRLGKIRSPHYRIVVADSRTRRDGRAIEEIGKYHPTYNPSVMEVDAERVAYWLGVGAQPTEPVLAILKKTGDWQKFKGEPAPAPLLQPAEKAARPSFEAIGGEDEGKGEAITQKKKADKRDEAAAESSASEA.

Residues 84-139 (KGEPAPAPLLQPAEKAARPSFEAIGGEDEGKGEAITQKKKADKRDEAAAESSASEA) are disordered.

Belongs to the bacterial ribosomal protein bS16 family.

The protein is Small ribosomal subunit protein bS16 of Streptomyces lividans.